A 137-amino-acid chain; its full sequence is MILGIGSDTIDIRRVQEVIERHGARFIDRIFTEAEQAKAERRAKAPRAWVATYAKRFAAKEACAKALGTGIRQGVWWRDMGVVNLPGGRPTMQLTGGALVRLESLLPPGHEARIDLTITDDWPTAQAFVIISALPRG.

Mg(2+) is bound by residues Asp8 and Glu61.

Belongs to the P-Pant transferase superfamily. AcpS family. Requires Mg(2+) as cofactor.

It localises to the cytoplasm. The catalysed reaction is apo-[ACP] + CoA = holo-[ACP] + adenosine 3',5'-bisphosphate + H(+). Its function is as follows. Transfers the 4'-phosphopantetheine moiety from coenzyme A to a Ser of acyl-carrier-protein. This chain is Holo-[acyl-carrier-protein] synthase, found in Afipia carboxidovorans (strain ATCC 49405 / DSM 1227 / KCTC 32145 / OM5) (Oligotropha carboxidovorans).